A 1719-amino-acid polypeptide reads, in one-letter code: MGVPKFYRWISERYPCLSEVVKEHQIPEFDNLYLDMNGIIHQCSHPNDDDVHFRISDDKIFTDIFHYLEVLFRIIKPRKVFFMAVDGVAPRAKMNQQRGRRFRSAKEAEDKIKKAIEKGETLPTEARFDSNCITPGTEFMARLHEHLKYFVNMKISTDKSWQGVTIYFSGHETPGEGEHKIMEFIRSEKAKPDHDPNTRHCLYGLDADLIMLGLTSHEAHFSLLREEVRFGGKKTQRVCAPEETTFHLLHLSLMREYIDYEFSALKEKITFKYDIEKIIDDWILMGFLVGNDFIPHLPHLHINHDALPLLYGTYIAILPELGGYINESGHLNLPRFERYLVKLSDFDREHFSEVFVDLKWFESKVGNKYLNEAAGAAAEEAKNCKEKRKPKGQENSLSWAALDKSEGEGVASRDNFEDETEDDDLFETEFRQYKRTYYMTKMGVDVVSDEFLANQAACYVQAIQWILHYYYHGVQSWSWYYPYHYAPFLSDIRSISTLKIHFELGKPFKPFEQLLAVLPSASKNLLPTCYQHLMTSEDSPIIEYYPPDFKTDLNGKQQEWEAVVLIPFIDETRLLEAMETCNHSLKKEERKRNQHSECLMCWYDRDTEFTYSSPWPEKFPAIERCCTRYKMISLDAWRVDINKNKITRVDQKALYFCGFPTLKHIKHKFFLKKSGVQVFQQSSRGENLMLEISVNAEPDELRIENIASAVLGKAVFVNWPHLEEARVVAVSDGETKFYIEEPPGTQKVYLGKTAPPSKVIQLTDKEQSNWTKEIQGISEQYLRRKGIIINETSAVVYAQLLTGRKYQISQNGEVRLEKQWSKQILPFVYQTIVKDIRAFDSRFSNIKTLDDLFPPRTMVFMLGTPYYGCTGEVQDSGDLITEGRIRVVFSIPCEPNLDALIQNQHKYSIKYNPGYVLAGRLGVSGYLVSRFTGSIFIGRGSRRNPHGDHKANVGLNLKFNKKNEEVPGYTKKVGNEWMYSSAAEQLLAEYIERAPELFSYIAKNSQEDVFYEDDIWPGENENGAEKVQEIITWLKGHPVSTLSRSSCDLHILDAAIVEKIEEEVEKCKQRKSNKKVRVTVKPHLMYRPLEQQHGVIPDRDAEFRLFDRVVNVRESFSVPVGLRGTVIGIKGASREADVLFEVLFDEEFPGGLTIRCSPGRGYRLPTSALVNLSHGSRCETGNQKLTAIVKPQPSVSHCSAAPSGHLGGLNHSPQSPFLPTQVPTKGDDEFCNIWQSLQGAGKTQHLQPTVQEKGAVLPQEISQVTEGHKSGFTDHSVRHQQRKHDSQRKFKEEYKSPKAECQSQKLSSKQTSGGSARCSIKLLKRNESPGTSEAQKVVTSYPNAVHKPPSGIENFLASLNLSKENEAQLPHHGEPPDEADLSPQSFAMKGTRMLKEILKIDSPDTRDSKNDMKKSDNEATVSSRRDERGVSAHPKPTCHMNKPHGTNEFQNVASVDSVCWPGQMPPVSTPVTELSRICSLVGMPQPDFSFLRTTQTMTVCQVKLSNGLLVHGPQCHSESEAKERAALFALQQLGSLGVSFPLPPPIFTNYPPAVPPGAVPPVFTQPTANIMPSSSHLFGSVSWRPPVPVAGNAFHYPSYPGTMPLAGGVPGGVHSQFIPLQVTKKRVANRKNFENKEAQSSQATPLQTNKPGSSEATKMTPQESPPASSSSSQAAQPVSSHVETASQGHVGSQPRSAPSSSKRKSRKLAVNFSVSKPSE.

Basic and acidic residues predominate over residues 1268–1298; the sequence is HKSGFTDHSVRHQQRKHDSQRKFKEEYKSPK. Positions 1268–1317 are disordered; the sequence is HKSGFTDHSVRHQQRKHDSQRKFKEEYKSPKAECQSQKLSSKQTSGGSAR. Positions 1301-1314 are enriched in polar residues; the sequence is CQSQKLSSKQTSGG. Residue S1382 is modified to Phosphoserine. Over residues 1397 to 1430 the composition is skewed to basic and acidic residues; that stretch reads ILKIDSPDTRDSKNDMKKSDNEATVSSRRDERGV. 2 disordered regions span residues 1397–1445 and 1634–1719; these read ILKI…KPHG and ENKE…KPSE. Polar residues predominate over residues 1638 to 1660; it reads AQSSQATPLQTNKPGSSEATKMT. Residues 1661 to 1680 are compositionally biased toward low complexity; sequence PQESPPASSSSSQAAQPVSS. Over residues 1681–1690 the composition is skewed to polar residues; it reads HVETASQGHV.

The protein belongs to the 5'-3' exonuclease family. In terms of assembly, found in a mRNP complex with UPF1, UPF2, UPF3B and XRN1. Associates with alpha and beta tubulins. Interacts with DIS3L2. Interacts with ZC3HAV1 in an RNA-dependent manner. Interacts with ZFP36L1. Interacts with TRIM71 (via NHL repeats) in an RNA-dependent manner. Interacts with YTHDC2 (via ANK repeats). Interacts with DHX34; the interaction is RNA-independent. As to expression, expressed in heart, brain (spinal cord, dorsal root and superior cervical ganglia, neurons of the cerebrum and brain stem), peripheral nerve fibers in the skin and intestine, spleen, lung, liver, skeletal muscle, kidney and testis.

The protein localises to the cytoplasm. In terms of biological role, major 5'-3' exoribonuclease involved in mRNA decay. Required for the 5'-3'-processing of the G4 tetraplex-containing DNA and RNA substrates. The kinetic of hydrolysis is faster for G4 RNA tetraplex than for G4 DNA tetraplex and monomeric RNA tetraplex. Binds to RNA and DNA. Plays a role in replication-dependent histone mRNA degradation. The polypeptide is 5'-3' exoribonuclease 1 (Mus musculus (Mouse)).